The primary structure comprises 453 residues: Carbamoyl phosphate synthase arginine-specific small chain (453 aa).

A mitochondrion-targeting transit peptide spans 1 to 28; the sequence is MFARVFKAMPARASALTSVNASIPARFM. The 188-residue stretch at 219–406 folds into the Glutamine amidotransferase type-1 domain; that stretch reads HVAVIDCGVK…IDSVKKYKAS (188 aa). The active-site Nucleophile is C295. Active-site residues include H379 and E381.

Belongs to the CarA family. As to quaternary structure, heterodimer composed of 2 chains; the small (or glutamine) chain promotes the hydrolysis of glutamine to ammonia, which is used by the large (or ammonia) chain to synthesize carbamoyl phosphate.

It is found in the mitochondrion matrix. The catalysed reaction is hydrogencarbonate + L-glutamine + 2 ATP + H2O = carbamoyl phosphate + L-glutamate + 2 ADP + phosphate + 2 H(+). It carries out the reaction L-glutamine + H2O = L-glutamate + NH4(+). It participates in amino-acid biosynthesis; L-arginine biosynthesis; carbamoyl phosphate from bicarbonate: step 1/1. Small subunit of the arginine-specific carbamoyl phosphate synthase (CPSase). CPSase catalyzes the formation of carbamoyl phosphate from the ammonia moiety of glutamine, carbonate, and phosphate donated by ATP, the first step of the arginine biosynthetic pathway. The small subunit (glutamine amidotransferase) binds and cleaves glutamine to supply the large subunit with the substrate ammonia. The chain is Carbamoyl phosphate synthase arginine-specific small chain (cpa1) from Aspergillus fumigatus (strain ATCC MYA-4609 / CBS 101355 / FGSC A1100 / Af293) (Neosartorya fumigata).